The chain runs to 255 residues: Acetylglutamate kinase (255 aa).

Substrate contacts are provided by residues 40–41 (GG), Arg62, and Asn153.

This sequence belongs to the acetylglutamate kinase family. ArgB subfamily.

Its subcellular location is the cytoplasm. The enzyme catalyses N-acetyl-L-glutamate + ATP = N-acetyl-L-glutamyl 5-phosphate + ADP. It functions in the pathway amino-acid biosynthesis; L-arginine biosynthesis; N(2)-acetyl-L-ornithine from L-glutamate: step 2/4. Functionally, catalyzes the ATP-dependent phosphorylation of N-acetyl-L-glutamate. The sequence is that of Acetylglutamate kinase from Bacillus cereus (strain ATCC 10987 / NRS 248).